We begin with the raw amino-acid sequence, 185 residues long: Elongation factor P (185 aa).

It belongs to the elongation factor P family.

It is found in the cytoplasm. It participates in protein biosynthesis; polypeptide chain elongation. In terms of biological role, involved in peptide bond synthesis. Stimulates efficient translation and peptide-bond synthesis on native or reconstituted 70S ribosomes in vitro. Probably functions indirectly by altering the affinity of the ribosome for aminoacyl-tRNA, thus increasing their reactivity as acceptors for peptidyl transferase. This is Elongation factor P from Halalkalibacterium halodurans (strain ATCC BAA-125 / DSM 18197 / FERM 7344 / JCM 9153 / C-125) (Bacillus halodurans).